The sequence spans 276 residues: MPALKVIATPIGNIEEVSPRVKAALTKCEVLFCEDTRVTKKLLGLLGIDFSNKQFIINNEFKEKQNLSKVANLIHQYHCGLVSDAGYPSVSDPGHILVEYVRTQLPQIAIEVINGPSALVCGLVTSGFPESPLLFLGFLDHKPTQVTQTLKHYQNFQGTIVLFEAVHRLQQTLEVIQTVFSNTEVFVGRELTKLHESHYWFNTSAPLPDITLKGEFVIVINNHHTQPVGQYSDQLLKQEITQLVQMGVKVKDACHYLAKRLQLKSNKLYTLFHESD.

The protein belongs to the methyltransferase superfamily. RsmI family.

It is found in the cytoplasm. It catalyses the reaction cytidine(1402) in 16S rRNA + S-adenosyl-L-methionine = 2'-O-methylcytidine(1402) in 16S rRNA + S-adenosyl-L-homocysteine + H(+). In terms of biological role, catalyzes the 2'-O-methylation of the ribose of cytidine 1402 (C1402) in 16S rRNA. The protein is Ribosomal RNA small subunit methyltransferase I of Mycoplasma pneumoniae (strain ATCC 29342 / M129 / Subtype 1) (Mycoplasmoides pneumoniae).